The sequence spans 291 residues: Light-independent protochlorophyllide reductase iron-sulfur ATP-binding protein (291 aa).

Residues 10-15 and Lys39 each bind ATP; that span reads GIGKST. Ser14 serves as a coordination point for Mg(2+). Residues Cys95 and Cys129 each contribute to the [4Fe-4S] cluster site. 180 to 181 serves as a coordination point for ATP; it reads NR.

The protein belongs to the NifH/BchL/ChlL family. As to quaternary structure, homodimer. Protochlorophyllide reductase is composed of three subunits; ChlL, ChlN and ChlB. Requires [4Fe-4S] cluster as cofactor.

It is found in the plastid. Its subcellular location is the chloroplast. The catalysed reaction is chlorophyllide a + oxidized 2[4Fe-4S]-[ferredoxin] + 2 ADP + 2 phosphate = protochlorophyllide a + reduced 2[4Fe-4S]-[ferredoxin] + 2 ATP + 2 H2O. The protein operates within porphyrin-containing compound metabolism; chlorophyll biosynthesis (light-independent). Its function is as follows. Component of the dark-operative protochlorophyllide reductase (DPOR) that uses Mg-ATP and reduced ferredoxin to reduce ring D of protochlorophyllide (Pchlide) to form chlorophyllide a (Chlide). This reaction is light-independent. The L component serves as a unique electron donor to the NB-component of the complex, and binds Mg-ATP. In Pinus koraiensis (Korean pine), this protein is Light-independent protochlorophyllide reductase iron-sulfur ATP-binding protein.